A 289-amino-acid chain; its full sequence is MMTTSYLAFPQFDPVIFSIGPLALHWYGLMYLVGFVFAMWLAVRRANKPGSGWTKDEVENLLYMGFLGVFVGGRLGYVLFYAFPSFLENPLYLFKVWDGGMSFHGGLMGVICVMLWFAHRTKRHFFQVADFIAPLIPFGLGAGRLGNFINGELWGRVTTDTPWAMLFPGSRSEDMMLAVSNPQWQAIFNQYGMLPRHPSQLYQMMLEGVALFIILNLFIRKSRPMGSVSGLFLIGYGTFRIITEFFRQPDAQLGLFGDLFSMGQILSLPMVIAGILMMVWAYRRQPVQQ.

The next 7 helical transmembrane spans lie at 23-43 (ALHW…WLAV), 61-81 (LLYM…VLFY), 99-119 (GGMS…WFAH), 125-145 (FFQV…AGRL), 199-219 (SQLY…NLFI), 226-246 (GSVS…TEFF), and 259-279 (LFSM…LMMV). A 1,2-diacyl-sn-glycero-3-phospho-(1'-sn-glycerol) is bound at residue Arg-144.

It belongs to the Lgt family.

Its subcellular location is the cell inner membrane. The enzyme catalyses L-cysteinyl-[prolipoprotein] + a 1,2-diacyl-sn-glycero-3-phospho-(1'-sn-glycerol) = an S-1,2-diacyl-sn-glyceryl-L-cysteinyl-[prolipoprotein] + sn-glycerol 1-phosphate + H(+). It functions in the pathway protein modification; lipoprotein biosynthesis (diacylglyceryl transfer). In terms of biological role, catalyzes the transfer of the diacylglyceryl group from phosphatidylglycerol to the sulfhydryl group of the N-terminal cysteine of a prolipoprotein, the first step in the formation of mature lipoproteins. This is Phosphatidylglycerol--prolipoprotein diacylglyceryl transferase from Pectobacterium carotovorum subsp. carotovorum (strain PC1).